Here is a 365-residue protein sequence, read N- to C-terminus: Succinyl-diaminopimelate desuccinylase (365 aa).

His64 contributes to the Zn(2+) binding site. The active site involves Asp66. Residue Asp95 participates in Zn(2+) binding. Residue Glu125 is the Proton acceptor of the active site. Residues Glu126, Glu154, and His339 each coordinate Zn(2+).

It belongs to the peptidase M20A family. DapE subfamily. In terms of assembly, homodimer. Requires Zn(2+) as cofactor. Co(2+) is required as a cofactor.

It catalyses the reaction N-succinyl-(2S,6S)-2,6-diaminopimelate + H2O = (2S,6S)-2,6-diaminopimelate + succinate. It participates in amino-acid biosynthesis; L-lysine biosynthesis via DAP pathway; LL-2,6-diaminopimelate from (S)-tetrahydrodipicolinate (succinylase route): step 3/3. In terms of biological role, catalyzes the hydrolysis of N-succinyl-L,L-diaminopimelic acid (SDAP), forming succinate and LL-2,6-diaminopimelate (DAP), an intermediate involved in the bacterial biosynthesis of lysine and meso-diaminopimelic acid, an essential component of bacterial cell walls. In Campylobacter fetus subsp. fetus (strain 82-40), this protein is Succinyl-diaminopimelate desuccinylase.